Reading from the N-terminus, the 205-residue chain is Guanylate kinase (205 aa).

A Guanylate kinase-like domain is found at 6–185; that stretch reads GLLIVLSRPS…ACDRIKAIVV (180 aa). 13-20 is an ATP binding site; that stretch reads RPSGVGKG.

It belongs to the guanylate kinase family.

The protein localises to the cytoplasm. The enzyme catalyses GMP + ATP = GDP + ADP. Functionally, essential for recycling GMP and indirectly, cGMP. The protein is Guanylate kinase of Bacillus cereus (strain ATCC 14579 / DSM 31 / CCUG 7414 / JCM 2152 / NBRC 15305 / NCIMB 9373 / NCTC 2599 / NRRL B-3711).